A 549-amino-acid chain; its full sequence is Glucose-6-phosphate isomerase (549 aa).

N6-acetyllysine occurs at positions 80, 228, and 234. Glu-355 acts as the Proton donor in catalysis. Catalysis depends on residues His-386 and Lys-514.

It belongs to the GPI family.

The protein resides in the cytoplasm. It carries out the reaction alpha-D-glucose 6-phosphate = beta-D-fructose 6-phosphate. The protein operates within carbohydrate biosynthesis; gluconeogenesis. It functions in the pathway carbohydrate degradation; glycolysis; D-glyceraldehyde 3-phosphate and glycerone phosphate from D-glucose: step 2/4. Catalyzes the reversible isomerization of glucose-6-phosphate to fructose-6-phosphate. The polypeptide is Glucose-6-phosphate isomerase (Escherichia coli (strain SE11)).